The chain runs to 333 residues: Holliday junction branch migration complex subunit RuvB (333 aa).

The tract at residues 1-182 (MDERLLSGES…FGVLSRLEYY (182 aa)) is large ATPase domain (RuvB-L). ATP contacts are provided by residues Leu21, Arg22, Gly63, Lys66, Thr67, Thr68, 129-131 (EDF), Arg172, Tyr182, and Arg219. Thr67 serves as a coordination point for Mg(2+). The tract at residues 183-253 (TVDQLSAIVE…ITQMALELLQ (71 aa)) is small ATPAse domain (RuvB-S). The tract at residues 256–333 (KLGLDHIDHK…EHFGMEIPKV (78 aa)) is head domain (RuvB-H). Positions 311 and 316 each coordinate DNA.

The protein belongs to the RuvB family. In terms of assembly, homohexamer. Forms an RuvA(8)-RuvB(12)-Holliday junction (HJ) complex. HJ DNA is sandwiched between 2 RuvA tetramers; dsDNA enters through RuvA and exits via RuvB. An RuvB hexamer assembles on each DNA strand where it exits the tetramer. Each RuvB hexamer is contacted by two RuvA subunits (via domain III) on 2 adjacent RuvB subunits; this complex drives branch migration. In the full resolvosome a probable DNA-RuvA(4)-RuvB(12)-RuvC(2) complex forms which resolves the HJ.

It localises to the cytoplasm. It catalyses the reaction ATP + H2O = ADP + phosphate + H(+). Functionally, the RuvA-RuvB-RuvC complex processes Holliday junction (HJ) DNA during genetic recombination and DNA repair, while the RuvA-RuvB complex plays an important role in the rescue of blocked DNA replication forks via replication fork reversal (RFR). RuvA specifically binds to HJ cruciform DNA, conferring on it an open structure. The RuvB hexamer acts as an ATP-dependent pump, pulling dsDNA into and through the RuvAB complex. RuvB forms 2 homohexamers on either side of HJ DNA bound by 1 or 2 RuvA tetramers; 4 subunits per hexamer contact DNA at a time. Coordinated motions by a converter formed by DNA-disengaged RuvB subunits stimulates ATP hydrolysis and nucleotide exchange. Immobilization of the converter enables RuvB to convert the ATP-contained energy into a lever motion, pulling 2 nucleotides of DNA out of the RuvA tetramer per ATP hydrolyzed, thus driving DNA branch migration. The RuvB motors rotate together with the DNA substrate, which together with the progressing nucleotide cycle form the mechanistic basis for DNA recombination by continuous HJ branch migration. Branch migration allows RuvC to scan DNA until it finds its consensus sequence, where it cleaves and resolves cruciform DNA. This chain is Holliday junction branch migration complex subunit RuvB, found in Bacillus cereus (strain G9842).